Here is a 237-residue protein sequence, read N- to C-terminus: Isoprenyl transferase (237 aa).

The active site involves Asp14. Asp14 contributes to the Mg(2+) binding site. Substrate contacts are provided by residues 15-18 (GNGR), Trp19, Arg27, His31, and 59-61 (STE). The active-site Proton acceptor is Asn62. Substrate is bound by residues Trp63, Arg65, Arg184, and 190–192 (RIS). Mg(2+) is bound at residue Glu203.

The protein belongs to the UPP synthase family. As to quaternary structure, homodimer. Requires Mg(2+) as cofactor.

Its function is as follows. Catalyzes the condensation of isopentenyl diphosphate (IPP) with allylic pyrophosphates generating different type of terpenoids. The chain is Isoprenyl transferase from Helicobacter hepaticus (strain ATCC 51449 / 3B1).